Consider the following 710-residue polypeptide: Protein phosphatase 1 regulatory subunit 37 (710 aa).

Residues 1-12 show a composition bias toward pro residues; the sequence is MEIPPQEAPPGP. Positions 1–46 are disordered; the sequence is MEIPPQEAPPGPGADADADAEAEEAPAEAGSSSGASPPTDGRLKAA. Residues 16-26 show a composition bias toward acidic residues; sequence ADADAEAEEAP. Positions 27-38 are enriched in low complexity; the sequence is AEAGSSSGASPP. 2 positions are modified to phosphoserine: S54 and S60. LRR repeat units lie at residues 224–244, 252–273, 281–301, 310–330, and 338–358; these read SLAV…MLLA, NLQE…AQLG, SLQI…AYIC, GLVT…AFLG, and SLET…RNLK. Positions 487-677 are disordered; sequence PLEESGDLPA…APPGLEAKGS (191 aa). Acidic residues predominate over residues 512-531; the sequence is SDSDSDSDREEQEEEEEDQS. Residues 543-565 are compositionally biased toward low complexity; that stretch reads SSSAPCPALLPSTDSLGPGDKSP. S581 carries the phosphoserine modification. Residues 603 to 624 show a composition bias toward pro residues; it reads PPVPPTSVSSPPPSPPSPPASP. Positions 637–649 are enriched in polar residues; it reads SEAQPQTEPSQAG. The span at 656–676 shows a compositional bias: low complexity; it reads LKPEFALALAPEAPPGLEAKG.

This sequence belongs to the PPP1R37 family. In terms of assembly, interacts with PPP1CA.

Functionally, inhibits phosphatase activity of protein phosphatase 1 (PP1) complexes. The chain is Protein phosphatase 1 regulatory subunit 37 (Ppp1r37) from Rattus norvegicus (Rat).